The sequence spans 160 residues: Cytochrome b6-f complex subunit 4 (160 aa).

Helical transmembrane passes span 36-56 (LLYIFPVVILGTIACNVGLAV), 95-115 (LLGVLLMVSVPTGLLTVPFLE), and 131-151 (TVFLIGTAVALWLGIGATLPI).

It belongs to the cytochrome b family. PetD subfamily. The 4 large subunits of the cytochrome b6-f complex are cytochrome b6, subunit IV (17 kDa polypeptide, petD), cytochrome f and the Rieske protein, while the 4 small subunits are petG, petL, petM and petN. The complex functions as a dimer.

Its subcellular location is the plastid. The protein resides in the chloroplast thylakoid membrane. In terms of biological role, component of the cytochrome b6-f complex, which mediates electron transfer between photosystem II (PSII) and photosystem I (PSI), cyclic electron flow around PSI, and state transitions. The sequence is that of Cytochrome b6-f complex subunit 4 from Saccharum hybrid (Sugarcane).